The primary structure comprises 1217 residues: Disease resistance protein RPS4 (1217 aa).

One can recognise a TIR domain in the interval 14 to 175 (PQHQVFINFR…EIVKAVKTAL (162 aa)). Glu-88 is a catalytic residue. The region spanning 211–472 (EQRLKDLEEK…FRSQDKDYVE (262 aa)) is the NB-ARC domain. 11 LRR repeats span residues 260–285 (HALI…LLGE), 436–459 (PNIV…AFLD), 614–636 (LKEV…DFNP), 637–659 (INLV…DKDT), 682–706 (AEKL…MKKM), 708–728 (MLAF…EMNL), 729–749 (ISLK…PLIS), 750–774 (DNIE…KLQR), 796–818 (LKAL…EIDI), 819–842 (SFLN…SVQY), and 861–887 (LSQL…NLQC). Residues 1162 to 1195 (TEGVDGRVKKKKKTRMDNGRPKKKQRSGRDDNQT) form a disordered region. The Nuclear localization signal motif lies at 1170-1177 (KKKKKTRM).

As to quaternary structure, interacts with EDS1.

It localises to the nucleus. The catalysed reaction is NAD(+) + H2O = ADP-D-ribose + nicotinamide + H(+). In terms of biological role, disease resistance (R) protein that specifically recognizes the AvrRps4 type III effector avirulence protein from Pseudomonas syringae. Resistance proteins guard the plant against pathogens that contain an appropriate avirulence protein via an indirect interaction with this avirulence protein. That triggers a defense system including the hypersensitive response, which restricts the pathogen growth. The combined presence of both regular and alternative RPS4 transcripts with truncated open reading frames (ORFs) is necessary for function. RPS4 function is regulated at multiple levels, including gene expression, alternative splicing, and protein stability. Acts as a disease resistance protein involved in resistance to fungal and bacterial pathogens, including R.solanacearum, P.syringae pv. tomato and C.higginsianum. In presence of RRS1, elicites an EDS1-dependent hypersensitive response. The sequence is that of Disease resistance protein RPS4 from Arabidopsis thaliana (Mouse-ear cress).